The following is a 653-amino-acid chain: Fructose-1,6-bisphosphatase class 3 2 (653 aa).

This sequence belongs to the FBPase class 3 family. Mn(2+) serves as cofactor.

It catalyses the reaction beta-D-fructose 1,6-bisphosphate + H2O = beta-D-fructose 6-phosphate + phosphate. It functions in the pathway carbohydrate biosynthesis; gluconeogenesis. This chain is Fructose-1,6-bisphosphatase class 3 2, found in Clostridium beijerinckii (strain ATCC 51743 / NCIMB 8052) (Clostridium acetobutylicum).